The following is a 391-amino-acid chain: Ferrochelatase (391 aa).

Fe cation is bound by residues His196 and Glu281.

The protein belongs to the ferrochelatase family.

It localises to the cytoplasm. The enzyme catalyses heme b + 2 H(+) = protoporphyrin IX + Fe(2+). It participates in porphyrin-containing compound metabolism; protoheme biosynthesis; protoheme from protoporphyrin-IX: step 1/1. In terms of biological role, catalyzes the ferrous insertion into protoporphyrin IX. This Prochlorococcus marinus (strain MIT 9215) protein is Ferrochelatase.